We begin with the raw amino-acid sequence, 474 residues long: Glycogen synthase (474 aa).

Lysine 15 serves as a coordination point for ADP-alpha-D-glucose.

It belongs to the glycosyltransferase 1 family. Bacterial/plant glycogen synthase subfamily.

It catalyses the reaction [(1-&gt;4)-alpha-D-glucosyl](n) + ADP-alpha-D-glucose = [(1-&gt;4)-alpha-D-glucosyl](n+1) + ADP + H(+). The protein operates within glycan biosynthesis; glycogen biosynthesis. Synthesizes alpha-1,4-glucan chains using ADP-glucose. This is Glycogen synthase from Chlamydia trachomatis serovar L2b (strain UCH-1/proctitis).